Here is an 804-residue protein sequence, read N- to C-terminus: Phenylalanine--tRNA ligase beta subunit (804 aa).

The tRNA-binding domain occupies 39 to 155 (AEGLKKIVVG…ADVKPGEEVY (117 aa)). Residues 408–483 (RNPSVVKTTV…RIYGYDNLKS (76 aa)) enclose the B5 domain. Positions 461, 467, 470, and 471 each coordinate Mg(2+). Residues 711 to 804 (PKFPAIERDL…LKESLKIKVR (94 aa)) enclose the FDX-ACB domain.

The protein belongs to the phenylalanyl-tRNA synthetase beta subunit family. Type 1 subfamily. As to quaternary structure, tetramer of two alpha and two beta subunits. Mg(2+) serves as cofactor.

It is found in the cytoplasm. The enzyme catalyses tRNA(Phe) + L-phenylalanine + ATP = L-phenylalanyl-tRNA(Phe) + AMP + diphosphate + H(+). This Lactobacillus johnsonii (strain CNCM I-12250 / La1 / NCC 533) protein is Phenylalanine--tRNA ligase beta subunit.